Consider the following 149-residue polypeptide: 3-dehydroquinate dehydratase 2 (149 aa).

The active-site Proton acceptor is the tyrosine 24. The substrate site is built by asparagine 75, histidine 81, and aspartate 88. Histidine 101 serves as the catalytic Proton donor. Substrate contacts are provided by residues 102 to 103 (LS) and arginine 112.

This sequence belongs to the type-II 3-dehydroquinase family. In terms of assembly, homododecamer.

The catalysed reaction is 3-dehydroquinate = 3-dehydroshikimate + H2O. It functions in the pathway metabolic intermediate biosynthesis; chorismate biosynthesis; chorismate from D-erythrose 4-phosphate and phosphoenolpyruvate: step 3/7. Functionally, catalyzes a trans-dehydration via an enolate intermediate. The protein is 3-dehydroquinate dehydratase 2 (aroQ2) of Pseudomonas putida (strain ATCC 47054 / DSM 6125 / CFBP 8728 / NCIMB 11950 / KT2440).